Reading from the N-terminus, the 160-residue chain is GPI-anchored protein LLG3 (160 aa).

Positions 1-23 (MKITHHCLVSLLSILLLSGFAFS) are cleaved as a signal peptide. N-linked (GlcNAc...) asparagine glycosylation is present at N56. A lipid anchor (GPI-anchor amidated serine) is attached at S137. The propeptide at 138-160 (HASIPLVSTHVLLITVSILFHLF) is removed in mature form.

As to expression, expressed in pollen, pollen tubes, sporophytic pistil tissues, in the early stages of female gametophyte development, and in unfertilized, mature ovules.

It localises to the cell membrane. This is GPI-anchored protein LLG3 from Arabidopsis thaliana (Mouse-ear cress).